We begin with the raw amino-acid sequence, 179 residues long: Large ribosomal subunit protein bL17 (179 aa).

Over residues 123–161 (KEKDTKKKDDSKKSDDKKTSKKEAGFKSSKGESEHKKNT) the composition is skewed to basic and acidic residues. The tract at residues 123–179 (KEKDTKKKDDSKKSDDKKTSKKEAGFKSSKGESEHKKNTDQVVDSSSNRRYNRVKGS) is disordered. Over residues 162-171 (DQVVDSSSNR) the composition is skewed to polar residues.

This sequence belongs to the bacterial ribosomal protein bL17 family. Part of the 50S ribosomal subunit. Contacts protein L32.

This is Large ribosomal subunit protein bL17 from Treponema denticola (strain ATCC 35405 / DSM 14222 / CIP 103919 / JCM 8153 / KCTC 15104).